We begin with the raw amino-acid sequence, 71 residues long: Conotoxin Tx11.3 (71 aa).

The first 19 residues, 1–19 (MKLCVTFLLVLVILPSVTG), serve as a signal peptide directing secretion. Positions 20-47 (VKSSERTLSGAALRGDRGTCSGRGQECK) are excised as a propeptide. 4 disulfide bridges follow: Cys39-Cys53, Cys46-Cys58, Cys52-Cys63, and Cys57-Cys70.

The protein belongs to the I1 superfamily. Expressed by the venom duct.

The protein resides in the secreted. This is Conotoxin Tx11.3 from Conus textile (Cloth-of-gold cone).